Reading from the N-terminus, the 2496-residue chain is Non-reducing polyketide synthase adrD (2496 aa).

Residues 15–254 (LVFGPQIAEI…HHASHITAVQ (240 aa)) form an N-terminal acylcarrier protein transacylase domain (SAT) region. The region spanning 387–808 (ATPIAITGMG…GSNAALVVKQ (422 aa)) is the Ketosynthase family 3 (KS3) domain. Residues Cys-552, His-687, and His-726 each act as for beta-ketoacyl synthase activity in the active site. Residues 914-1223 (LCFGGQNGNE…QSLDLGGPQG (310 aa)) form a malonyl-CoA:ACP transacylase (MAT) domain region. Catalysis depends on Ser-1001, which acts as the For acyl/malonyl transferase activity. The segment at 1295-1423 (KEFVQLLTKQ…GEISLHPFGQ (129 aa)) is N-terminal hotdog fold. Residues 1295–1602 (KEFVQLLTKQ…FTSVSIAGLA (308 aa)) form the PKS/mFAS DH domain. The interval 1296–1601 (EFVQLLTKQP…EFTSVSIAGL (306 aa)) is product template (PT) domain. His-1326 (proton acceptor; for dehydratase activity) is an active-site residue. Positions 1451–1602 (ESSGLKGFAV…FTSVSIAGLA (152 aa)) are C-terminal hotdog fold. Residue Asp-1509 is the Proton donor; for dehydratase activity of the active site. A compositionally biased stretch (basic and acidic residues) spans 1615 to 1629 (EKASPDLSLRNDSKV). The segment at 1615–1645 (EKASPDLSLRNDSKVDVNPTPQNTAPVVQPT) is disordered. Positions 1633 to 1645 (PTPQNTAPVVQPT) are enriched in polar residues. The 75-residue stretch at 1652–1726 (PGYFVVVQEM…ALVQTIFPDA (75 aa)) folds into the Carrier domain. O-(pantetheine 4'-phosphoryl)serine is present on Ser-1686. The interval 1888–2121 (QHRSEHHLLK…GFQWVDWTHN (234 aa)) is methyltransferase (CMeT) domain. A thioesterase (TE) domain region spans residues 2151 to 2496 (RVMNEETVPY…YEFLRDHVRY (346 aa)). Active-site for thioesterase activity residues include Ser-2274 and Asp-2433.

It carries out the reaction 3 malonyl-CoA + acetyl-CoA + 2 S-adenosyl-L-methionine = 3,5-dimethylorsellinate + 2 S-adenosyl-L-homocysteine + 3 CO2 + 4 CoA. Its pathway is secondary metabolite biosynthesis; terpenoid biosynthesis. Its function is as follows. Non-reducing polyketide synthase; part of the gene cluster that mediates the biosynthesis of andrastins, meroterpenoid compounds that exhibit inhibitory activity against ras farnesyltransferase, suggesting that they could be promising leads for antitumor agents. The first step of the pathway is the synthesis of 3,5-dimethylorsellinic acid (DMOA) by the polyketide synthase adrD via condensation of one acetyl-CoA starter unit with 3 malonyl-CoA units and 2 methylations. DMAO is then converted to farnesyl-DMAO by the prenyltransferase adrG. The methyltransferase adrK catalyzes the methylation of the carboxyl group of farnesyl-DMAO to farnesyl-DMAO methyl ester which is further converted to epoxyfarnesyl-DMAO methyl ester by the FAD-dependent monooxygenase adrH. The terpene cyclase adrI then catalyzes the carbon skeletal rearrangement to generate the andrastin E, the first compound in the pathway having the andrastin scaffold, with the tetracyclic ring system. The post-cyclization tailoring enzymes adrF, adrE, adrJ, and adrA, are involved in the conversion of andrastin E into andrastin A. The short chain dehydrogenase adrF is responsible for the oxidation of the C-3 a hydroxyl group of andrastin E to yield the corresponding ketone, andrastin D. The ketoreductase adrE stereoselectively reduces the carbonyl moiety to reverse the stereochemistry of the C-3 position to yield andrastin F. The acetyltransferase adrJ is the acetyltransferase that attaches the acetyl group to the C-3 hydroxyl group of andrastin F to yield andrastin C. Finally, the cytochrome P450 monooxygenase adrA catalyzes two sequential oxidation reactions of the C-23 methyl group, to generate the corresponding alcohol andrastin B, and aldehyde andrastin A. The sequence is that of Non-reducing polyketide synthase adrD from Penicillium rubens (strain ATCC 28089 / DSM 1075 / NRRL 1951 / Wisconsin 54-1255) (Penicillium chrysogenum).